Consider the following 544-residue polypeptide: Chaperonin GroEL 3 (544 aa).

ATP contacts are provided by residues 30-33, Lys-51, 87-91, Gly-415, and Asp-496; these read TLGP and DGTTT.

The protein belongs to the chaperonin (HSP60) family. As to quaternary structure, forms a cylinder of 14 subunits composed of two heptameric rings stacked back-to-back. Interacts with the co-chaperonin GroES.

The protein resides in the cytoplasm. It carries out the reaction ATP + H2O + a folded polypeptide = ADP + phosphate + an unfolded polypeptide.. In terms of biological role, together with its co-chaperonin GroES, plays an essential role in assisting protein folding. The GroEL-GroES system forms a nano-cage that allows encapsulation of the non-native substrate proteins and provides a physical environment optimized to promote and accelerate protein folding. This is Chaperonin GroEL 3 from Rhizobium meliloti (strain 1021) (Ensifer meliloti).